A 207-amino-acid chain; its full sequence is MIOREX complex component 11 (207 aa).

A mitochondrion-targeting transit peptide spans 1 to 46 (MTVMNLFFRPCQLQMGSGPLELMLKRPTQLTTFMNTRPGGSTQIRF). The Mitochondrial matrix portion of the chain corresponds to 47 to 98 (ISGNLDPVKRREDRLRKIFSKSRLLTRLNKNPKFSHYFDRLSEAGTVPTLTS). The chain crosses the membrane as a helical span at residues 99-119 (FFILHEVTAILPLFLLWWLLY). The Mitochondrial intermembrane segment spans residues 120 to 177 (NLDLSDDFKLPNFLNGLMDSCHTAMEKFVGKRYQECLNKNKLILSGTVAYVTVKLLYP). The chain crosses the membrane as a helical span at residues 178–198 (VRIFISIWGAPYFGKWLLLPF). The Mitochondrial matrix portion of the chain corresponds to 199–207 (QKLKHLIKK).

This sequence belongs to the MRX11 family. Associates with the mitochondrial ribosome.

It localises to the mitochondrion. Its subcellular location is the mitochondrion inner membrane. Functionally, component of MIOREX complexes, large expressome-like assemblies of ribosomes with factors involved in all the steps of post-transcriptional gene expression. The protein is MIOREX complex component 11 of Saccharomyces cerevisiae (strain ATCC 204508 / S288c) (Baker's yeast).